Reading from the N-terminus, the 1444-residue chain is Adhesin P1 (1444 aa).

The first 30 residues, 1–30 (MHQPKKRLAKKSWAFLTAALTLGVITGVGG), serve as a signal peptide directing secretion. Disordered regions lie at residues 231 to 283 (QSSF…EVER), 845 to 885 (IPFE…ALPN), and 927 to 949 (GDSN…TNEG). Basic and acidic residues predominate over residues 240 to 257 (LQKDSPVKDSSKQGEKLS). Over residues 258-272 (ETTASSMSSGMATST) the composition is skewed to low complexity. 2 stretches are compositionally biased toward polar residues: residues 851–860 (KPSNNSTPFD) and 868–878 (VTPSGGSSKPT). The segment covering 933-946 (FNKDSEQKWDKTET) has biased composition (basic and acidic residues). Residues 1353–1373 (VLPLIVTVPIVVIILSVTLGL) traverse the membrane as a helical segment. Residues 1419-1444 (NAPKKLKQATPTKPTPKTPPKPPVKQ) form a disordered region. The segment covering 1431–1444 (KPTPKTPPKPPVKQ) has biased composition (pro residues).

This sequence belongs to the adhesin P1 family.

It localises to the cell membrane. Functionally, the protein is the major adhesin mediating the attachment of this mycoplasma to the ciliated epithelium. The chain is Adhesin P1 (mgpA) from Mycoplasma genitalium (strain ATCC 33530 / DSM 19775 / NCTC 10195 / G37) (Mycoplasmoides genitalium).